A 326-amino-acid chain; its full sequence is tRNA-modifying protein YgfZ (326 aa).

Folate-binding residues include Trp-27 and Trp-189.

The protein belongs to the tRNA-modifying YgfZ family.

It localises to the cytoplasm. In terms of biological role, folate-binding protein involved in regulating the level of ATP-DnaA and in the modification of some tRNAs. It is probably a key factor in regulatory networks that act via tRNA modification, such as initiation of chromosomal replication. The chain is tRNA-modifying protein YgfZ from Escherichia coli O6:H1 (strain CFT073 / ATCC 700928 / UPEC).